A 123-amino-acid chain; its full sequence is Ribosome-binding factor A (123 aa).

This sequence belongs to the RbfA family. Monomer. Binds 30S ribosomal subunits, but not 50S ribosomal subunits or 70S ribosomes.

Its subcellular location is the cytoplasm. In terms of biological role, one of several proteins that assist in the late maturation steps of the functional core of the 30S ribosomal subunit. Associates with free 30S ribosomal subunits (but not with 30S subunits that are part of 70S ribosomes or polysomes). Required for efficient processing of 16S rRNA. May interact with the 5'-terminal helix region of 16S rRNA. The polypeptide is Ribosome-binding factor A (Ralstonia pickettii (strain 12J)).